The chain runs to 349 residues: Fructose-bisphosphate aldolase 2, chloroplastic (349 aa).

Residues arginine 47 and lysine 137 each contribute to the substrate site. Glutamate 177 (proton acceptor) is an active-site residue. Lysine 219 (schiff-base intermediate with dihydroxyacetone-P) is an active-site residue.

Belongs to the class I fructose-bisphosphate aldolase family.

Its subcellular location is the plastid. It is found in the chloroplast. The enzyme catalyses beta-D-fructose 1,6-bisphosphate = D-glyceraldehyde 3-phosphate + dihydroxyacetone phosphate. Its pathway is carbohydrate degradation; glycolysis; D-glyceraldehyde 3-phosphate and glycerone phosphate from D-glucose: step 4/4. This chain is Fructose-bisphosphate aldolase 2, chloroplastic, found in Pisum sativum (Garden pea).